The primary structure comprises 63 residues: Translational regulator CsrA (63 aa).

It belongs to the CsrA/RsmA family. In terms of assembly, homodimer; the beta-strands of each monomer intercalate to form a hydrophobic core, while the alpha-helices form wings that extend away from the core.

The protein localises to the cytoplasm. A key translational regulator that binds mRNA to regulate translation initiation and/or mRNA stability. Mediates global changes in gene expression, shifting from rapid growth to stress survival by linking envelope stress, the stringent response and the catabolite repression systems. Usually binds in the 5'-UTR; binding at or near the Shine-Dalgarno sequence prevents ribosome-binding, repressing translation, binding elsewhere in the 5'-UTR can activate translation and/or stabilize the mRNA. Its function is antagonized by small RNA(s). This chain is Translational regulator CsrA, found in Haemophilus influenzae (strain PittEE).